The chain runs to 118 residues: UPF0102 protein CMM_1377 (118 aa).

This sequence belongs to the UPF0102 family.

In Clavibacter michiganensis subsp. michiganensis (strain NCPPB 382), this protein is UPF0102 protein CMM_1377.